The following is a 216-amino-acid chain: Large ribosomal subunit protein uL24m (216 aa).

The transit peptide at 1 to 9 (MRLSALLAL) directs the protein to the mitochondrion. Phosphoserine is present on serine 24. The KOW domain occupies 56 to 89 (LFCGDRVEILEGKDAGKQGKVVQVIRQRNWVVVE).

The protein belongs to the universal ribosomal protein uL24 family. In terms of assembly, component of the mitochondrial ribosome large subunit (39S) which comprises a 16S rRNA and about 50 distinct proteins.

Its subcellular location is the mitochondrion. The protein is Large ribosomal subunit protein uL24m (MRPL24) of Bos taurus (Bovine).